The primary structure comprises 461 residues: tRNA modification GTPase MnmE (461 aa).

(6S)-5-formyl-5,6,7,8-tetrahydrofolate-binding residues include Arg27, Glu89, and Arg128. The 159-residue stretch at Gly224–Phe382 folds into the TrmE-type G domain. A K(+)-binding site is contributed by Asn234. GTP is bound by residues Asn234–Ser239, Thr253–Thr259, and Asp278–Gly281. Ser238 lines the Mg(2+) pocket. 3 residues coordinate K(+): Thr253, Ile255, and Thr258. Thr259 contacts Mg(2+). Lys461 serves as a coordination point for (6S)-5-formyl-5,6,7,8-tetrahydrofolate.

Belongs to the TRAFAC class TrmE-Era-EngA-EngB-Septin-like GTPase superfamily. TrmE GTPase family. In terms of assembly, homodimer. Heterotetramer of two MnmE and two MnmG subunits. It depends on K(+) as a cofactor.

It is found in the cytoplasm. Its function is as follows. Exhibits a very high intrinsic GTPase hydrolysis rate. Involved in the addition of a carboxymethylaminomethyl (cmnm) group at the wobble position (U34) of certain tRNAs, forming tRNA-cmnm(5)s(2)U34. The chain is tRNA modification GTPase MnmE from Lactobacillus johnsonii (strain CNCM I-12250 / La1 / NCC 533).